The chain runs to 399 residues: Chaperone protein DnaJ 1 (399 aa).

The J domain maps to 10–75; sequence DYYKVLGVPK…KKRKEYDEAR (66 aa). A CR-type zinc finger spans residues 166-244; sequence GATVPLRMSS…CKGSGRAKSS (79 aa). Residues cysteine 179, cysteine 182, cysteine 195, cysteine 198, cysteine 218, cysteine 221, cysteine 232, and cysteine 235 each coordinate Zn(2+). 4 CXXCXGXG motif repeats span residues 179 to 186, 195 to 202, 218 to 225, and 232 to 239; these read CKACSGTG, CPTCVGTG, CPDCKGRG, and CEVCKGSG.

This sequence belongs to the DnaJ family. As to quaternary structure, homodimer. Requires Zn(2+) as cofactor.

It is found in the cytoplasm. Functionally, participates actively in the response to hyperosmotic and heat shock by preventing the aggregation of stress-denatured proteins and by disaggregating proteins, also in an autonomous, DnaK-independent fashion. Unfolded proteins bind initially to DnaJ; upon interaction with the DnaJ-bound protein, DnaK hydrolyzes its bound ATP, resulting in the formation of a stable complex. GrpE releases ADP from DnaK; ATP binding to DnaK triggers the release of the substrate protein, thus completing the reaction cycle. Several rounds of ATP-dependent interactions between DnaJ, DnaK and GrpE are required for fully efficient folding. Also involved, together with DnaK and GrpE, in the DNA replication of plasmids through activation of initiation proteins. The polypeptide is Chaperone protein DnaJ 1 (Streptomyces coelicolor (strain ATCC BAA-471 / A3(2) / M145)).